The following is a 282-amino-acid chain: Centromere protein P (282 aa).

Residues 1–80 (MEQKYEEDIQ…KDLRRQTEIN (80 aa)) adopt a coiled-coil conformation.

This sequence belongs to the CENP-P/CTF19 family.

It is found in the nucleus. The protein localises to the chromosome. The protein resides in the centromere. Its function is as follows. Probable component of a centromeric complex involved in assembly of kinetochore proteins, mitotic progression and chromosome segregation. This Danio rerio (Zebrafish) protein is Centromere protein P (cenpp).